A 969-amino-acid chain; its full sequence is Protein translocase subunit SecA (969 aa).

ATP is bound by residues Q99, 117–121, and D631; that span reads GEGKT.

This sequence belongs to the SecA family. Monomer and homodimer. Part of the essential Sec protein translocation apparatus which comprises SecA, SecYEG and auxiliary proteins SecDF. Other proteins may also be involved.

The protein localises to the cell inner membrane. Its subcellular location is the cytoplasm. It catalyses the reaction ATP + H2O + cellular proteinSide 1 = ADP + phosphate + cellular proteinSide 2.. In terms of biological role, part of the Sec protein translocase complex. Interacts with the SecYEG preprotein conducting channel. Has a central role in coupling the hydrolysis of ATP to the transfer of proteins into and across the cell membrane, serving as an ATP-driven molecular motor driving the stepwise translocation of polypeptide chains across the membrane. The sequence is that of Protein translocase subunit SecA from Chlamydia abortus (strain DSM 27085 / S26/3) (Chlamydophila abortus).